Here is a 56-residue protein sequence, read N- to C-terminus: Large ribosomal subunit protein bL32 (56 aa).

It belongs to the bacterial ribosomal protein bL32 family.

The polypeptide is Large ribosomal subunit protein bL32 (Bacillus cereus (strain ATCC 14579 / DSM 31 / CCUG 7414 / JCM 2152 / NBRC 15305 / NCIMB 9373 / NCTC 2599 / NRRL B-3711)).